A 282-amino-acid polypeptide reads, in one-letter code: D-arabinitol 2-dehydrogenase [ribulose-forming] (282 aa).

NADP(+) is bound by residues Leu32 and Asn53. The Proton donor role is filled by Ser170. Positions 185, 189, 218, and 220 each coordinate NADP(+). Tyr185 (proton acceptor) is an active-site residue. Lys189 functions as the Lowers pKa of active site Tyr in the catalytic mechanism.

Belongs to the short-chain dehydrogenases/reductases (SDR) family.

The enzyme catalyses D-arabinitol + NAD(+) = D-ribulose + NADH + H(+). The protein operates within carbohydrate metabolism; D-arabinitol metabolism. Catalyzes the NAD(+)-dependent oxidation of D-arabinitol at carbon 4 to produce D-ribulose. In Candida tropicalis (Yeast), this protein is D-arabinitol 2-dehydrogenase [ribulose-forming] (ARD).